Reading from the N-terminus, the 352-residue chain is 3-isopropylmalate dehydrogenase (352 aa).

71 to 87 (GAHDSAWNQLPRHLRPE) is an NAD(+) binding site. The substrate site is built by arginine 94, arginine 104, arginine 132, and aspartate 218. Positions 218, 242, and 246 each coordinate Mg(2+). 275–287 (GSAPDIAGQGVAN) lines the NAD(+) pocket.

Belongs to the isocitrate and isopropylmalate dehydrogenases family. LeuB type 1 subfamily. As to quaternary structure, homodimer. It depends on Mg(2+) as a cofactor. The cofactor is Mn(2+).

Its subcellular location is the cytoplasm. It carries out the reaction (2R,3S)-3-isopropylmalate + NAD(+) = 4-methyl-2-oxopentanoate + CO2 + NADH. It functions in the pathway amino-acid biosynthesis; L-leucine biosynthesis; L-leucine from 3-methyl-2-oxobutanoate: step 3/4. Catalyzes the oxidation of 3-carboxy-2-hydroxy-4-methylpentanoate (3-isopropylmalate) to 3-carboxy-4-methyl-2-oxopentanoate. The product decarboxylates to 4-methyl-2 oxopentanoate. The chain is 3-isopropylmalate dehydrogenase from Deinococcus radiodurans (strain ATCC 13939 / DSM 20539 / JCM 16871 / CCUG 27074 / LMG 4051 / NBRC 15346 / NCIMB 9279 / VKM B-1422 / R1).